We begin with the raw amino-acid sequence, 145 residues long: 3-dehydroquinate dehydratase (145 aa).

Catalysis depends on Y24, which acts as the Proton acceptor. Substrate contacts are provided by N75, H81, and D88. The active-site Proton donor is the H101. Substrate-binding positions include 102–103 and R112; that span reads IS.

Belongs to the type-II 3-dehydroquinase family. In terms of assembly, homododecamer.

It carries out the reaction 3-dehydroquinate = 3-dehydroshikimate + H2O. It functions in the pathway metabolic intermediate biosynthesis; chorismate biosynthesis; chorismate from D-erythrose 4-phosphate and phosphoenolpyruvate: step 3/7. Catalyzes a trans-dehydration via an enolate intermediate. This chain is 3-dehydroquinate dehydratase, found in Corynebacterium glutamicum (strain R).